A 94-amino-acid chain; its full sequence is MSFKGNPKVQKVMVQPINLIFRYLQNRSRVQVWLYENISLRIEGHIVGFDEYMNLVLDDAEEVYVKTRQRRNLGRIMLKGDNITLIQNVSPTKD.

Residues 17–92 enclose the Sm domain; it reads INLIFRYLQN…ITLIQNVSPT (76 aa).

Belongs to the snRNP Sm proteins family. In terms of assembly, core component of the spliceosomal U1, U2, U4 and U5 small nuclear ribonucleoproteins (snRNPs), the building blocks of the spliceosome. Interacts with the SMN complex.

It localises to the nucleus. The protein resides in the cytoplasm. The protein localises to the cytosol. Plays a role in pre-mRNA splicing as a core component of the spliceosomal U1, U2, U4 and U5 small nuclear ribonucleoproteins (snRNPs), the building blocks of the spliceosome. The polypeptide is Probable small nuclear ribonucleoprotein E (SmE) (Drosophila melanogaster (Fruit fly)).